We begin with the raw amino-acid sequence, 424 residues long: Serpin-Z2A (424 aa).

Positions 370 to 394 (GTEAAASTACTIRLLSMSYPEDFVA) are RCL.

It belongs to the serpin family.

In terms of biological role, probable serine protease inhibitor. This is Serpin-Z2A from Oryza sativa subsp. japonica (Rice).